The sequence spans 508 residues: Probable G-protein coupled receptor 101 (508 aa).

Residues 1-35 (MTSTCTNSTRESNSSHTCMPLSKMPISLAHGIIRS) are Extracellular-facing. N-linked (GlcNAc...) asparagine glycans are attached at residues Asn-7 and Asn-13. Residues 36-56 (TVLVIFLAASFVGNIVLALVL) form a helical membrane-spanning segment. At 57–68 (QRKPQLLQVTNR) the chain is on the cytoplasmic side. A helical membrane pass occupies residues 69–89 (FIFNLLVTDLLQISLVAPWVV). Topologically, residues 90-106 (ATSVPLFWPLNSHFCTA) are extracellular. A disulfide bridge links Cys-104 with Cys-182. The chain crosses the membrane as a helical span at residues 107–127 (LVSLTHLFAFASVNTIVVVSV). The Cytoplasmic portion of the chain corresponds to 128 to 149 (DRYLSIIHPLSYPSKMTQRRGY). The chain crosses the membrane as a helical span at residues 150–170 (LLLYGTWIVAILQSTPPLYGW). Topologically, residues 171–196 (GQAAFDERNALCSMIWGASPSYTILS) are extracellular. Residues 197-217 (VVSFIVIPLIVMIACYSVVFC) form a helical membrane-spanning segment. Topologically, residues 218–399 (AARRQHALLY…PRCYQCKAAK (182 aa)) are cytoplasmic. The disordered stretch occupies residues 244–338 (NEDEEGAEKK…ENSMKADKGR (95 aa)). Basic and acidic residues-rich tracts occupy residues 250–288 (AEKK…KAKE) and 318–338 (MEGK…DKGR). The chain crosses the membrane as a helical span at residues 400 to 420 (VIFIIIFSYVLSLGPYCFLAV). Residues 421-433 (LAVWVDVETQVPQ) are Extracellular-facing. A helical membrane pass occupies residues 434-454 (WVITIIIWLFFLQCCIHPYVY). Topologically, residues 455–508 (GYMHKTIKKEIQDMLKKFFCKEKPPKEDSHPDLPGTEGGTEGKIVPSYDSATFP) are cytoplasmic. A compositionally biased stretch (basic and acidic residues) spans 476–485 (EKPPKEDSHP). The interval 476 to 508 (EKPPKEDSHPDLPGTEGGTEGKIVPSYDSATFP) is disordered.

The protein belongs to the G-protein coupled receptor 1 family.

The protein localises to the cell membrane. Its function is as follows. Orphan receptor. The polypeptide is Probable G-protein coupled receptor 101 (GPR101) (Homo sapiens (Human)).